The following is a 159-amino-acid chain: Serine-protein kinase RsbW (159 aa).

Belongs to the anti-sigma-factor family.

It carries out the reaction L-seryl-[protein] + ATP = O-phospho-L-seryl-[protein] + ADP + H(+). The catalysed reaction is L-threonyl-[protein] + ATP = O-phospho-L-threonyl-[protein] + ADP + H(+). Functionally, negative regulator of sigma-B activity. Phosphorylates and inactivates its specific antagonist protein, RsbV. Upon phosphorylation of RsbV, RsbW is released and binds to sigma-B, thereby blocking its ability to form an RNA polymerase holoenzyme (E-sigma-B). The protein is Serine-protein kinase RsbW of Staphylococcus aureus (strain MRSA252).